The chain runs to 124 residues: Small ribosomal subunit protein uS13 (124 aa).

The tract at residues 99-124 (PCRGQKTKTNARTCKGPKKTVANKKK) is disordered. Over residues 113–124 (KGPKKTVANKKK) the composition is skewed to basic residues.

It belongs to the universal ribosomal protein uS13 family. As to quaternary structure, part of the 30S ribosomal subunit. Forms a loose heterodimer with protein S19. Forms two bridges to the 50S subunit in the 70S ribosome.

Functionally, located at the top of the head of the 30S subunit, it contacts several helices of the 16S rRNA. In the 70S ribosome it contacts the 23S rRNA (bridge B1a) and protein L5 of the 50S subunit (bridge B1b), connecting the 2 subunits; these bridges are implicated in subunit movement. Contacts the tRNAs in the A and P-sites. This is Small ribosomal subunit protein uS13 from Lachnospira eligens (strain ATCC 27750 / DSM 3376 / VPI C15-48 / C15-B4) (Eubacterium eligens).